The following is a 422-amino-acid chain: Nuclear hormone receptor family member nhr-54 (422 aa).

The nuclear receptor DNA-binding region spans 14-92; that stretch reads SVKCAICYKA…LGMTTENVRT (79 aa). NR C4-type zinc fingers lie at residues 17-37 and 53-80; these read CAICYKAGHGQHFGVETCRAC and CTRKSGKCKIGSDETKDVMCKFCRFKKC. The NR LBD domain occupies 161–422; the sequence is PDDDVIVELN…VFTEPEFFRV (262 aa).

Belongs to the nuclear hormone receptor family.

The protein localises to the nucleus. Functionally, orphan nuclear receptor. In Caenorhabditis elegans, this protein is Nuclear hormone receptor family member nhr-54 (nhr-54).